A 296-amino-acid polypeptide reads, in one-letter code: 33 kDa chaperonin (296 aa).

2 disulfide bridges follow: Cys238-Cys240 and Cys271-Cys274.

It belongs to the HSP33 family. Post-translationally, under oxidizing conditions two disulfide bonds are formed involving the reactive cysteines. Under reducing conditions zinc is bound to the reactive cysteines and the protein is inactive.

It is found in the cytoplasm. Its function is as follows. Redox regulated molecular chaperone. Protects both thermally unfolding and oxidatively damaged proteins from irreversible aggregation. Plays an important role in the bacterial defense system toward oxidative stress. This is 33 kDa chaperonin from Clostridium botulinum (strain ATCC 19397 / Type A).